The primary structure comprises 301 residues: Nodulation protein D 3 (301 aa).

Residues 6–63 enclose the HTH lysR-type domain; it reads LDLNLLVVLDALLTARNLTAAASSINLSQPAMSAAVARLRNYFNDELFTMSGRERVLT. The H-T-H motif DNA-binding region spans 23–43; it reads LTAAASSINLSQPAMSAAVAR.

Belongs to the LysR transcriptional regulatory family.

In terms of biological role, nodD regulates the expression of the nodABCFE genes which encode other nodulation proteins. NodD is also a negative regulator of its own expression. Binds flavonoids as inducers. This Mesorhizobium japonicum (strain LMG 29417 / CECT 9101 / MAFF 303099) (Mesorhizobium loti (strain MAFF 303099)) protein is Nodulation protein D 3 (nodD3).